The primary structure comprises 1006 residues: MSNSRNNRVMVEGVGARVVRGPDWKWGKQDGGEGHVGTVRSFESPEEVVVVWDNGTAANYRCSGAYDLRILDSAPTGIKHDGTMCDTCRQQPIIGIRWKCAECTNYDLCTVCYHGDKHHLRHRFYRITTPGSERVLLESRRKSKKITARGIFAGARVVRGVDWQWEDQDGGNGRRGKVTEIQDWSASSPHSAAYVLWDNGAKNLYRVGFEGMSDLKCVQDAKGGSFYRDHCPVLGEQNGNRNPGGLQIGDLVNIDLDLEIVQSLQHGHGGWTDGMFETLTTTGTVCGIDEDHDIVVQYPSGNRWTFNPAVLTKANIVRSGDAAQGAEGGTSQFQVGDLVQVCYDLERIKLLQRGHGEWAEAMLPTLGKVGRVQQIYSDSDLKVEVCGTSWTYNPAAVSKVAPAGSAISNASGERLSQLLKKLFETQESGDLNEELVKAAANGDVAKVEDLLKRPDVDVNGQCAGHTAMQAASQNGHVDILKLLLKQNVDVEAEDKDGDRAVHHAAFGDEGAVIEVLHRGSADLNARNKRRQTPLHIAVNKGHLQVVKTLLDFGCHPSLQDSEGDTPLHDAISKKRDDILAVLLEAGADVTITNNNGFNALHHAALRGNPSAMRVLLSKLPRPWIVDEKKDDGYTALHLAALNNHVEVAELLVHQGNANLDIQNVNQQTALHLAVERQHTQIVRLLVRAGAKLDIQDKDGDTPLHEALRHHTLSQLRQLQDMQDVGKVDAAWEPSKNTLIMGLGTQGAEKKSAASIACFLAANGADLSIRNKKGQSPLDLCPDPSLCKALAKCHKEKVSGQVGSRSPSMISNDSETLEECMVCSDMKRDTLFGPCGHIATCSLCSPRVKKCLICKEQVQSRTKIEECVVCSDKKAAVLFQPCGHMCACENCASLMKKCVQCRAVVERRVPFITCCGGKSSEDPSDEISSGNIPVLQKDKDNTNVNADVQKLQQQLQDIKEQTMCPVCLDRLKNMIFLCGHGTCQLCGDRMSECPICRKAIERRILLY.

An MIB/HERC2 1 domain is found at 6 to 74 (NNRVMVEGVG…AYDLRILDSA (69 aa)). The ZZ-type zinc-finger motif lies at 80-132 (HDGTMCDTCRQQPIIGIRWKCAECTNYDLCTVCYHGDKHHLRHRFYRITTPGS). Residues cysteine 85, cysteine 88, cysteine 100, cysteine 103, cysteine 109, cysteine 112, histidine 118, and histidine 122 each coordinate Zn(2+). In terms of domain architecture, MIB/HERC2 2 spans 143–221 (SKKITARGIF…MSDLKCVQDA (79 aa)). Serine 408 is subject to Phosphoserine. ANK repeat units follow at residues 430–460 (DLNEELVKAAANGDVAKVEDLLKRPDVDVNG), 463–492 (AGHTAMQAASQNGHVDILKLLLKQNVDVEA), 496–525 (DGDRAVHHAAFGDEGAVIEVLHRGSADLNA), 529–558 (RRQTPLHIAVNKGHLQVVKTLLDFGCHPSL), 562–591 (EGDTPLHDAISKKRDDILAVLLEAGADVTI), 595–627 (NGFNALHHAALRGNPSAMRVLLSKLPRPWIVDE), 631–661 (DGYTALHLAALNNHVEVAELLVHQGNANLDI), 665–694 (NQQTALHLAVERQHTQIVRLLVRAGAKLDI), and 698–729 (DGDTPLHEALRHHTLSQLRQLQDMQDVGKVDA). 2 consecutive RING-type zinc fingers follow at residues 819–854 (CMVCSDMKRDTLFGPCGHIATCSLCSPRVKKCLICK) and 866–901 (CVVCSDKKAAVLFQPCGHMCACENCASLMKKCVQCR). Residues 935–962 (QKDKDNTNVNADVQKLQQQLQDIKEQTM) adopt a coiled-coil conformation. Residues 963–996 (CPVCLDRLKNMIFLCGHGTCQLCGDRMSECPICR) form an RING-type 3 zinc finger.

In terms of assembly, interacts with CEP131 and PCM1. Ubiquitinated; this modification is inhibited in response to cellular stress, such as ultraviolet light (UV) radiation or heat shock. Ubiquitinated; possibly via autoubiquitination. As to expression, detected in all tissues tested. Present in embryo, embryonic stem cells, bladder, skeletal muscle, bladder, uterus, testis, stomach, colon, ileum, trachea, lung, aorta, kidney, spleen, liver and vas deferens (at protein level). Highly expressed in testis.

Its subcellular location is the cytoplasm. It localises to the cytoskeleton. It is found in the microtubule organizing center. The protein localises to the centrosome. The protein resides in the centriolar satellite. Its subcellular location is the cell membrane. It catalyses the reaction S-ubiquitinyl-[E2 ubiquitin-conjugating enzyme]-L-cysteine + [acceptor protein]-L-lysine = [E2 ubiquitin-conjugating enzyme]-L-cysteine + N(6)-ubiquitinyl-[acceptor protein]-L-lysine.. Its pathway is protein modification; protein ubiquitination. Its function is as follows. E3 ubiquitin-protein ligase that mediates ubiquitination of Delta receptors, which act as ligands of Notch proteins. Positively regulates the Delta-mediated Notch signaling by ubiquitinating the intracellular domain of Delta, leading to endocytosis of Delta receptors. Involved in ubiquitination of centriolar satellite CEP131, CEP290 and PCM1 proteins and hence inhibits primary cilium formation in proliferating cells. Mediates 'Lys-63'-linked polyubiquitination of TBK1, which probably participates in kinase activation. Probably mediates ubiquitination and subsequent proteasomal degradation of DAPK1, thereby antagonizing anti-apoptotic effects of DAPK1 to promote TNF-induced apoptosis. The chain is E3 ubiquitin-protein ligase MIB1 (Mib1) from Mus musculus (Mouse).